A 94-amino-acid chain; its full sequence is CRISPR-associated endoribonuclease Cas2 (94 aa).

Asp-11 contacts Mg(2+).

The protein belongs to the CRISPR-associated endoribonuclease Cas2 protein family. In terms of assembly, homodimer, forms a heterotetramer with a Cas1 homodimer. Mg(2+) serves as cofactor.

Its function is as follows. CRISPR (clustered regularly interspaced short palindromic repeat), is an adaptive immune system that provides protection against mobile genetic elements (viruses, transposable elements and conjugative plasmids). CRISPR clusters contain sequences complementary to antecedent mobile elements and target invading nucleic acids. CRISPR clusters are transcribed and processed into CRISPR RNA (crRNA). Functions as a ssRNA-specific endoribonuclease. Involved in the integration of spacer DNA into the CRISPR cassette. The polypeptide is CRISPR-associated endoribonuclease Cas2 (Thermus thermophilus (strain ATCC 27634 / DSM 579 / HB8)).